Here is a 250-residue protein sequence, read N- to C-terminus: Ribosomal RNA small subunit methyltransferase J (250 aa).

Residues 101–102, 117–118, 153–154, and aspartate 171 each bind S-adenosyl-L-methionine; these read RD, ER, and SS.

The protein belongs to the methyltransferase superfamily. RsmJ family.

The protein resides in the cytoplasm. The enzyme catalyses guanosine(1516) in 16S rRNA + S-adenosyl-L-methionine = N(2)-methylguanosine(1516) in 16S rRNA + S-adenosyl-L-homocysteine + H(+). Specifically methylates the guanosine in position 1516 of 16S rRNA. The sequence is that of Ribosomal RNA small subunit methyltransferase J from Escherichia coli (strain UTI89 / UPEC).